We begin with the raw amino-acid sequence, 125 residues long: Small ribosomal subunit protein uS13 (125 aa).

The segment at 97 to 125 is disordered; that stretch reads PLRGQRTKTNARTRKGKRKTVANKKMASK.

Belongs to the universal ribosomal protein uS13 family. Part of the 30S ribosomal subunit. Forms a loose heterodimer with protein S19. Forms two bridges to the 50S subunit in the 70S ribosome.

Its function is as follows. Located at the top of the head of the 30S subunit, it contacts several helices of the 16S rRNA. In the 70S ribosome it contacts the 23S rRNA (bridge B1a) and protein L5 of the 50S subunit (bridge B1b), connecting the 2 subunits; these bridges are implicated in subunit movement. Contacts the tRNAs in the A and P-sites. This is Small ribosomal subunit protein uS13 from Borrelia hermsii (strain HS1 / DAH).